The sequence spans 634 residues: Factor of DNA methylation 1 (634 aa).

A coiled-coil region spans residues leucine 288–threonine 469. Basic and acidic residues predominate over residues glutamate 349 to alanine 364. The disordered stretch occupies residues glutamate 349–glutamate 375.

Homodimer. Interacts with IDN2 and AGO4. Forms a complex with IDN2 and FMD2/INDL2. Highly expressed in flowers and at lower levels in roots, leaves and stems.

In terms of biological role, forms a complex with IDN2 and FDM2/IDNL2 that is required for RNA-directed DNA methylation (RdDM) and that functions at a downstream step of the RdDM pathway. Required for de novo DNA methylation and 24 nucleotide small interfering RNA (siRNA) accumulation. Binds unmethylated but not methylated DNAs through its coiled-coil domain. May bind double-stranded RNAs (dsRNAs) with 5'-overhangs through its XS domain. However, according to, FMD1 does not bind dsRNAs. The polypeptide is Factor of DNA methylation 1 (Arabidopsis thaliana (Mouse-ear cress)).